Consider the following 326-residue polypeptide: MIPVLPPLEALLDRLYVVALPMRVRFRGITTREVALIEGPAGWGEFGAFVEYQSAQACAWLASAIETAYCAPPPVRRDRVPINATVPAVAAAQVGEVLARFPGARTAKVKVAEPGQSLADDIERVNAVRELVPMVRVDANGGWGVAEAVAAAAALTADGPLEYLEQPCATVAELAELRRRVDVPIAADESIRKAEDPLAVVRAQAADIAVLKVAPLGGISALLDIAARIAVPVVVSSALDSAVGIAAGLTAAAALPELDHACGLGTGGLFEEDVAEPAAPVDGFLAVARTTPDPARLQALGAPPQRRQWWIDRVKACYSLLVPSFG.

Catalysis depends on Lys-110, which acts as the Proton donor. 3 residues coordinate Mg(2+): Asp-138, Glu-165, and Asp-188. Residue Lys-212 is the Proton acceptor of the active site.

It belongs to the mandelate racemase/muconate lactonizing enzyme family. MenC type 1 subfamily. A divalent metal cation is required as a cofactor.

The catalysed reaction is (1R,6R)-6-hydroxy-2-succinyl-cyclohexa-2,4-diene-1-carboxylate = 2-succinylbenzoate + H2O. It functions in the pathway quinol/quinone metabolism; 1,4-dihydroxy-2-naphthoate biosynthesis; 1,4-dihydroxy-2-naphthoate from chorismate: step 4/7. Its pathway is quinol/quinone metabolism; menaquinone biosynthesis. Functionally, converts 2-succinyl-6-hydroxy-2,4-cyclohexadiene-1-carboxylate (SHCHC) to 2-succinylbenzoate (OSB). This Mycobacterium bovis (strain ATCC BAA-935 / AF2122/97) protein is o-succinylbenzoate synthase.